Reading from the N-terminus, the 302-residue chain is MRTRLWDAASAVYERLLTREIDGAPAHVAVIQDGNRRYAREHGDDPTDGYQSGARTTERVLEWCSDLGVEELTLYAFSTENFERPPDQQQHLFDLLESKLREFADADRVHADRVRIRAIGDTGRLPQRVRDAITYAESRTAGYDGFTLNVALAYGGRDELLTAARGVADAVAAGDLDPADIDAQAIESRLHTSPVRDVDLIIRTGGDERTSNFLPWHANGSEAAVFFCTPYWPEFSKVDLLRAIRTYESRAASWRQTRAKRALALVRALGSEVGEARRVLDRFKGALPDPPEDVEAETQSAD.

Residue Asp33 is part of the active site. Mg(2+) is bound at residue Asp33. Substrate contacts are provided by residues 34–37 (GNRR) and 78–80 (STE). Asn81 acts as the Proton acceptor in catalysis. Residues Phe82, Arg84, Arg203, and 209–211 (RTS) each bind substrate.

The protein belongs to the UPP synthase family. Homodimer. Requires Mg(2+) as cofactor.

The enzyme catalyses geranylgeranyl diphosphate + 7 isopentenyl diphosphate = tri-trans,hepta-cis-undecaprenyl diphosphate + 7 diphosphate. Functionally, catalyzes the sequential condensation of isopentenyl diphosphate (IPP) with geranylgeranyl diphosphate (GGPP) to yield (2Z,6Z,10Z,14Z,18Z,22Z,26Z,30E,34E,38E)-undecaprenyl diphosphate (tritrans,heptacis-UPP). It is probably the precursor of glycosyl carrier lipids. The chain is Tritrans,polycis-undecaprenyl-diphosphate synthase (geranylgeranyl-diphosphate specific) from Halobacterium salinarum (strain ATCC 700922 / JCM 11081 / NRC-1) (Halobacterium halobium).